Consider the following 135-residue polypeptide: 6,7-dimethyl-8-ribityllumazine synthase (135 aa).

Residues F12, 44-46 (AYD), and 68-70 (CVI) each bind 5-amino-6-(D-ribitylamino)uracil. Residue 73–74 (AT) coordinates (2S)-2-hydroxy-3-oxobutyl phosphate. The active-site Proton donor is H76. Residue L101 participates in 5-amino-6-(D-ribitylamino)uracil binding. Residue R116 participates in (2S)-2-hydroxy-3-oxobutyl phosphate binding.

It belongs to the DMRL synthase family.

It carries out the reaction (2S)-2-hydroxy-3-oxobutyl phosphate + 5-amino-6-(D-ribitylamino)uracil = 6,7-dimethyl-8-(1-D-ribityl)lumazine + phosphate + 2 H2O + H(+). The protein operates within cofactor biosynthesis; riboflavin biosynthesis; riboflavin from 2-hydroxy-3-oxobutyl phosphate and 5-amino-6-(D-ribitylamino)uracil: step 1/2. In terms of biological role, catalyzes the formation of 6,7-dimethyl-8-ribityllumazine by condensation of 5-amino-6-(D-ribitylamino)uracil with 3,4-dihydroxy-2-butanone 4-phosphate. This is the penultimate step in the biosynthesis of riboflavin. This chain is 6,7-dimethyl-8-ribityllumazine synthase, found in Methanoculleus marisnigri (strain ATCC 35101 / DSM 1498 / JR1).